A 235-amino-acid polypeptide reads, in one-letter code: Purine nucleoside phosphorylase DeoD-type (235 aa).

His-4 provides a ligand contact to a purine D-ribonucleoside. Residues Gly-20, Arg-24, Arg-43, and 87–90 each bind phosphate; that span reads RVGT. A purine D-ribonucleoside-binding positions include 179-181 and 203-204; these read EME and SN.

This sequence belongs to the PNP/UDP phosphorylase family. As to quaternary structure, homohexamer; trimer of homodimers.

The enzyme catalyses a purine D-ribonucleoside + phosphate = a purine nucleobase + alpha-D-ribose 1-phosphate. The catalysed reaction is a purine 2'-deoxy-D-ribonucleoside + phosphate = a purine nucleobase + 2-deoxy-alpha-D-ribose 1-phosphate. Catalyzes the reversible phosphorolytic breakdown of the N-glycosidic bond in the beta-(deoxy)ribonucleoside molecules, with the formation of the corresponding free purine bases and pentose-1-phosphate. This chain is Purine nucleoside phosphorylase DeoD-type, found in Levilactobacillus brevis (strain ATCC 367 / BCRC 12310 / CIP 105137 / JCM 1170 / LMG 11437 / NCIMB 947 / NCTC 947) (Lactobacillus brevis).